The sequence spans 304 residues: Ribonuclease Z (304 aa).

Zn(2+)-binding residues include His63, His65, Asp67, His68, His141, Asp208, and His266. Asp67 acts as the Proton acceptor in catalysis.

The protein belongs to the RNase Z family. Homodimer. The cofactor is Zn(2+).

The enzyme catalyses Endonucleolytic cleavage of RNA, removing extra 3' nucleotides from tRNA precursor, generating 3' termini of tRNAs. A 3'-hydroxy group is left at the tRNA terminus and a 5'-phosphoryl group is left at the trailer molecule.. Its function is as follows. Zinc phosphodiesterase, which displays some tRNA 3'-processing endonuclease activity. Probably involved in tRNA maturation, by removing a 3'-trailer from precursor tRNA. This is Ribonuclease Z from Chlamydia trachomatis serovar L2 (strain ATCC VR-902B / DSM 19102 / 434/Bu).